The sequence spans 830 residues: Adhesion G protein-coupled receptor E2 (830 aa).

The signal sequence occupies residues 1–22; the sequence is MRHGHPRLLPGLLMLLLLPLGA. Residues 23–540 lie on the Extracellular side of the membrane; sequence AAQKTSGCAR…MAHYDVQEED (518 aa). The region spanning 26-68 is the EGF-like 1 domain; that stretch reads KTSGCARWCPPKSTCVNATTCRCSPGFSSLSGEIFSSPLESCD. 5 disulfide bridges follow: cysteine 30–cysteine 40, cysteine 34–cysteine 46, cysteine 48–cysteine 67, cysteine 73–cysteine 87, and cysteine 81–cysteine 96. A glycan (N-linked (GlcNAc...) asparagine) is linked at asparagine 42. The EGF-like 1; calcium-binding domain occupies 69–108; the sequence is DIDECGPPPLVSCGRLADCQNTEGSYHCMCSPGYALASGA. Residue asparagine 113 is glycosylated (N-linked (GlcNAc...) asparagine). The EGF-like 2; calcium-binding domain occupies 121–159; it reads DVDECQLKPRVCKSRGICTNTKGSYTCKCPPGFELNLGD. Disulfide bonds link cysteine 125–cysteine 138, cysteine 132–cysteine 147, cysteine 169–cysteine 182, cysteine 176–cysteine 191, cysteine 218–cysteine 231, and cysteine 225–cysteine 240. Residues 165–203 enclose the EGF-like 3; calcium-binding domain; sequence DVNECTSGQNPCHNSTHCLNNIGGYECRCRPGWKPVPGS. Residue asparagine 178 is glycosylated (N-linked (GlcNAc...) asparagine). The region spanning 214-253 is the EGF-like 4; calcium-binding domain; sequence DVDECSSGKHTCHYSTVCINTVGSYKCRCRRGWKPKPRFQ. Residues asparagine 258, asparagine 348, asparagine 361, and asparagine 379 are each glycosylated (N-linked (GlcNAc...) asparagine). Residues 358–537 form the GAIN-B domain; that stretch reads WTFNASAGTD…AVLMAHYDVQ (180 aa). 2 disulfide bridges follow: cysteine 489/cysteine 519 and cysteine 507/cysteine 521. The segment at 489–537 is GPS; the sequence is CVFWEHSQDECGHWSTRGCTVVDSGDTSTTCQCTHLSSFAVLMAHYDVQ. The chain crosses the membrane as a helical span at residues 541 to 561; sequence LVLPVITYVGLGLSLLCLLLA. Residues 562-576 lie on the Cytoplasmic side of the membrane; sequence ALTFLLCKAIQNTST. The helical transmembrane segment at 577 to 597 threads the bilayer; it reads SLHLQLLICLFLAHLLFLMAI. Over 598-603 the chain is Extracellular; the sequence is DRTEIK. Residues 604-624 form a helical membrane-spanning segment; that stretch reads VLCSIIAGALHYLYLASFTWM. At 625-651 the chain is on the cytoplasmic side; sequence LLEGLHLFLTARNLMVVNYSSVSMLMK. The chain crosses the membrane as a helical span at residues 652–672; that stretch reads KLMYPVGYGVPTLIVAISAAS. The Extracellular portion of the chain corresponds to 673–690; it reads RSHLYGTRTRCWLNPEER. The chain crosses the membrane as a helical span at residues 691–711; the sequence is FIWSFLGPVCTIFSVNLGFFL. Topologically, residues 712 to 744 are cytoplasmic; the sequence is MTLWILKSKLSSLNSDVSTLQNTRMLTFKAIAQ. Residues 745 to 765 form a helical membrane-spanning segment; sequence LFILGCTWCLGILQVGPAAHV. The Extracellular portion of the chain corresponds to 766 to 767; the sequence is MA. Residues 768-788 form a helical membrane-spanning segment; that stretch reads YLFTIINSLQGVFIFLVYCLL. Topologically, residues 789–830 are cytoplasmic; it reads SQQVREEYGKWFKGIRKTRAESEKYTLSSRAMSDVNKPMMVN.

This sequence belongs to the G-protein coupled receptor 2 family. Adhesion G-protein coupled receptor (ADGR) subfamily. As to quaternary structure, forms a heterodimer, consisting of a large extracellular region non-covalently linked to a seven-transmembrane moiety. Interacts with chondroitin sulfate; the interaction with chondroitin sulfate is calcium-dependent. Interacts with CD55. In terms of processing, autoproteolytically cleaved into 2 subunits, an extracellular alpha subunit and a seven-transmembrane beta subunit.

Its subcellular location is the cell membrane. It localises to the cell projection. The protein resides in the ruffle membrane. Cell surface receptor that binds to the chondroitin sulfate moiety of glycosaminoglycan chains and promotes cell attachment. Promotes granulocyte chemotaxis, degranulation and adhesion. In macrophages, promotes the release of inflammatory cytokines, including IL8 and TNF. Signals probably through G-proteins. This is Adhesion G protein-coupled receptor E2 (ADGRE2) from Canis lupus familiaris (Dog).